Reading from the N-terminus, the 368-residue chain is Protein RecA (368 aa).

80 to 87 (GPESSGKT) lines the ATP pocket. Positions 344-353 (NPTFTATPDS) are enriched in polar residues. The tract at residues 344–368 (NPTFTATPDSENADNADDEFSEEEL) is disordered. A compositionally biased stretch (acidic residues) spans 354 to 368 (ENADNADDEFSEEEL).

The protein belongs to the RecA family.

Its subcellular location is the cytoplasm. Functionally, can catalyze the hydrolysis of ATP in the presence of single-stranded DNA, the ATP-dependent uptake of single-stranded DNA by duplex DNA, and the ATP-dependent hybridization of homologous single-stranded DNAs. It interacts with LexA causing its activation and leading to its autocatalytic cleavage. In Mannheimia haemolytica (Pasteurella haemolytica), this protein is Protein RecA.